Here is a 967-residue protein sequence, read N- to C-terminus: Mediator of RNA polymerase II transcription subunit 14 (967 aa).

Belongs to the Mediator complex subunit 14 family. Component of the Mediator complex.

It localises to the nucleus. Component of the Mediator complex, a coactivator involved in the regulated transcription of nearly all RNA polymerase II-dependent genes. Mediator functions as a bridge to convey information from gene-specific regulatory proteins to the basal RNA polymerase II transcription machinery. Mediator is recruited to promoters by direct interactions with regulatory proteins and serves as a scaffold for the assembly of a functional preinitiation complex with RNA polymerase II and the general transcription factors. This Eremothecium gossypii (strain ATCC 10895 / CBS 109.51 / FGSC 9923 / NRRL Y-1056) (Yeast) protein is Mediator of RNA polymerase II transcription subunit 14 (RGR1).